Reading from the N-terminus, the 362-residue chain is Tyrosyl-DNA phosphodiesterase 2 (362 aa).

Met-1 bears the N-acetylmethionine mark. Residues 1-20 (MELGSCLEGGREAAEEEGEP) form a disordered region. Glycyl lysine isopeptide (Lys-Gly) (interchain with G-Cter in SUMO2) cross-links involve residues Lys-23 and Lys-82. Residues 87-109 (LTNEETTDSTTSKISPSEDTQQE) form a disordered region. Residues Thr-88 and Thr-92 each carry the phosphothreonine; by ACVR1B modification. Over residues 94 to 109 (DSTTSKISPSEDTQQE) the composition is skewed to polar residues. The residue at position 95 (Ser-95) is a Phosphoserine. The tract at residues 120 to 124 (NIDGL) is interaction with 5' end of substrate DNA. Mg(2+)-binding residues include Asp-122 and Glu-152. The segment at 226 to 231 (HLESTR) is interaction with 5' end of substrate DNA. Catalysis depends on Asp-262, which acts as the Proton donor/acceptor. The interaction with 5' end of substrate DNA stretch occupies residues 264–266 (NLR).

This sequence belongs to the CCR4/nocturin family. Interacts with TRAF2, TRAF3, TRAF5, TRAF6, TNFRSF8/CD30, TNFRSF5/CD40, TNFRSF1B/TNF-R75, ETS1, ETS2, FLI1, SMAD3 and ACVR1B/ALK4. As to quaternary structure, (Microbial infection) Interacts with Hantaan hantavirus nucleoprotein. In terms of assembly, (Microbial infection) Interacts with Seoul hantavirus nucleoprotein. Mg(2+) is required as a cofactor. Requires Mn(2+) as cofactor. Ubiquitinated by TRAF6. Widely expressed. Highly expressed in various brain regions, including the frontal and occipital lobes, the hippocampus, the striatum and the cerebellum.

It localises to the nucleus. The protein localises to the PML body. It is found in the nucleolus. The protein resides in the cytoplasm. DNA repair enzyme that can remove a variety of covalent adducts from DNA through hydrolysis of a 5'-phosphodiester bond, giving rise to DNA with a free 5' phosphate. Catalyzes the hydrolysis of dead-end complexes between DNA and the topoisomerase 2 (TOP2) active site tyrosine residue. The 5'-tyrosyl DNA phosphodiesterase activity can enable the repair of TOP2-induced DNA double-strand breaks/DSBs without the need for nuclease activity, creating a 'clean' DSB with 5'-phosphate termini that are ready for ligation. Thereby, protects the transcription of many genes involved in neurological development and maintenance from the abortive activity of TOP2. Hydrolyzes 5'-phosphoglycolates on protruding 5' ends on DSBs due to DNA damage by radiation and free radicals. Has preference for single-stranded DNA or duplex DNA with a 4 base pair overhang as substrate. Acts as a regulator of ribosome biogenesis following stress. Also has 3'-tyrosyl DNA phosphodiesterase activity, but less efficiently and much slower than TDP1. Constitutes the major if not only 5'-tyrosyl-DNA phosphodiesterase in cells. Also acts as an adapter by participating in the specific activation of MAP3K7/TAK1 in response to TGF-beta: associates with components of the TGF-beta receptor-TRAF6-TAK1 signaling module and promotes their ubiquitination dependent complex formation. Involved in non-canonical TGF-beta induced signaling routes. May also act as a negative regulator of ETS1 and may inhibit NF-kappa-B activation. Functionally, (Microbial infection) Used by picornaviruses to remove the small polypeptide, VPg (virus Protein genome-linked, the primer for viral RNA synthesis), from the genomic RNA of the virus. Acts as a 5'-tyrosyl RNA phosphodiesterase and cleaves the covalent VPg-Tyr-RNA bond. This cleavage would play a role in viral replication and occur in viral replication vesicles, but would not act on viral mRNA. The sequence is that of Tyrosyl-DNA phosphodiesterase 2 from Homo sapiens (Human).